A 526-amino-acid polypeptide reads, in one-letter code: MSDFYQDFNKRRTFAIISHPDAGKTTVTEKLLLFGGAIQLAGTVKGRKADRHATSDWMEMEKERGISITTSVMQFIHNQHVINLLDTPGHEDFSEDTYRTLTAVDSALMVIDVAKGVEERTVKLMEVCRLRDTPIMTFINKLDREGREPIDLLDEVESVLGIQCAPITWPVGMGKRFKGIYHRYQDIIYLYQQGSNAKKVEAMQIKGLDNPQLDELIGDSADELREEIELVKGASHGFNLEDYLAGKMTPVYFGSAINNFGIKELLDDFVEYAPGPQPRATQERVVSPNEETFSGFVFKIQANMDPKHRDRIAFLRVCSGAYKKGMKLSHLRIGKEVQISNALTFMAGDRSHTELALAGDIIGLHNHGTIRIGDTFTQGEQLKFTGIPNFAPELFRLVRLRDPLKSKALLKGLIELSEEGATQVFRPLNSNQLILGAVGILQFDVVAHRLKHEYKVDCIYESVNVTCARWVYSEDDKAMSEFRTKAYDYLALDGGDMLMYLAPTKVNLTMAEERYPKIKFCATREH.

The region spanning 9–277 (NKRRTFAIIS…DFVEYAPGPQ (269 aa)) is the tr-type G domain. GTP is bound by residues 18 to 25 (SHPDAGKT), 86 to 90 (DTPGH), and 140 to 143 (NKLD).

This sequence belongs to the TRAFAC class translation factor GTPase superfamily. Classic translation factor GTPase family. PrfC subfamily.

Its subcellular location is the cytoplasm. Functionally, increases the formation of ribosomal termination complexes and stimulates activities of RF-1 and RF-2. It binds guanine nucleotides and has strong preference for UGA stop codons. It may interact directly with the ribosome. The stimulation of RF-1 and RF-2 is significantly reduced by GTP and GDP, but not by GMP. In Legionella pneumophila (strain Corby), this protein is Peptide chain release factor 3.